A 222-amino-acid chain; its full sequence is MAAPLTPNAQAYGMLSERTRRRMSDRLRQHGISDERVLSAMHEVPRHLFVDQALATRAYDDVSLPIGHGQTISQPLTVARMTELLIQGRQPGKILEVGTGCGYQTAVLLKTGAEVYSIERLGAILDQARRNLRAAKLVHARLVHGDGNAGLPEAAPFDGIIITAAARAVPAPLVDQLAEGGRMVLPLGDAEQHLWLLEKTAQGLQKTRLDPVKFVPLLGGRG.

The active site involves serine 73.

Belongs to the methyltransferase superfamily. L-isoaspartyl/D-aspartyl protein methyltransferase family.

It is found in the cytoplasm. The enzyme catalyses [protein]-L-isoaspartate + S-adenosyl-L-methionine = [protein]-L-isoaspartate alpha-methyl ester + S-adenosyl-L-homocysteine. Catalyzes the methyl esterification of L-isoaspartyl residues in peptides and proteins that result from spontaneous decomposition of normal L-aspartyl and L-asparaginyl residues. It plays a role in the repair and/or degradation of damaged proteins. In Chromobacterium violaceum (strain ATCC 12472 / DSM 30191 / JCM 1249 / CCUG 213 / NBRC 12614 / NCIMB 9131 / NCTC 9757 / MK), this protein is Protein-L-isoaspartate O-methyltransferase.